Reading from the N-terminus, the 180-residue chain is uncharacterized protein (180 aa).

2 coiled-coil regions span residues 3 to 82 (LKSL…QKIA) and 95 to 179 (REYE…EKYG).

This is an uncharacterized protein from Aquifex aeolicus (strain VF5).